The sequence spans 336 residues: Aspartate--ammonia ligase (336 aa).

This sequence belongs to the class-II aminoacyl-tRNA synthetase family. AsnA subfamily.

It is found in the cytoplasm. It carries out the reaction L-aspartate + NH4(+) + ATP = L-asparagine + AMP + diphosphate + H(+). It participates in amino-acid biosynthesis; L-asparagine biosynthesis; L-asparagine from L-aspartate (ammonia route): step 1/1. The sequence is that of Aspartate--ammonia ligase from Lactobacillus acidophilus (strain ATCC 700396 / NCK56 / N2 / NCFM).